Reading from the N-terminus, the 369-residue chain is 4-hydroxy-3-methylbut-2-en-1-yl diphosphate synthase (flavodoxin) (369 aa).

4 residues coordinate [4Fe-4S] cluster: Cys-270, Cys-273, Cys-305, and Glu-312.

It belongs to the IspG family. It depends on [4Fe-4S] cluster as a cofactor.

The enzyme catalyses (2E)-4-hydroxy-3-methylbut-2-enyl diphosphate + oxidized [flavodoxin] + H2O + 2 H(+) = 2-C-methyl-D-erythritol 2,4-cyclic diphosphate + reduced [flavodoxin]. Its pathway is isoprenoid biosynthesis; isopentenyl diphosphate biosynthesis via DXP pathway; isopentenyl diphosphate from 1-deoxy-D-xylulose 5-phosphate: step 5/6. Functionally, converts 2C-methyl-D-erythritol 2,4-cyclodiphosphate (ME-2,4cPP) into 1-hydroxy-2-methyl-2-(E)-butenyl 4-diphosphate. The protein is 4-hydroxy-3-methylbut-2-en-1-yl diphosphate synthase (flavodoxin) of Pseudomonas syringae pv. syringae (strain B728a).